A 415-amino-acid chain; its full sequence is Tumor necrosis factor receptor superfamily member 3 (415 aa).

The signal sequence occupies residues 1–30 (MRLPRASSPCGLAWGPLLLGLSGLLVASQP). Residues 31-223 (QLVPPYRIEN…NPPEPGAMLL (193 aa)) are Extracellular-facing. N40 carries N-linked (GlcNAc...) asparagine glycosylation. TNFR-Cys repeat units lie at residues 42–81 (TCWD…TVCK), 82–124 (TCPH…KAEC), 125–170 (RCQP…VNCV), and 171–213 (PCKP…TICK). 10 disulfides stabilise this stretch: C43-C58, C59-C72, C62-C80, C83-C98, C101-C116, C104-C124, C126-C132, C139-C150, C142-C169, and C172-C187. Residue N179 is glycosylated (N-linked (GlcNAc...) asparagine). A helical transmembrane segment spans residues 224–244 (LAILLSLVLFLLFTTVLACAW). Residues 245 to 415 (MRHPSLCRKL…ETETLGCQDL (171 aa)) are Cytoplasmic-facing. The disordered stretch occupies residues 261–304 (HPEGEESPPCPAPRADPHFPDLAEPLLPMSGDLSPSPAGPPTAP). The residue at position 315 (S315) is a Phosphoserine. The disordered stretch occupies residues 361-399 (LGGTRGPGDPPAPPEPPYPTPEEGAPGPSELSTPYQEDG). The span at 368–380 (GDPPAPPEPPYPT) shows a compositional bias: pro residues.

Self-associates; dimerization and trimerization are promoted by lymphotoxin (LTA(3)). Associates with TRAF3. Associates with TRAF4. Associates with TRAF5.

It localises to the membrane. In terms of biological role, receptor for the heterotrimeric lymphotoxin containing LTA and LTB, and for TNFS14/LIGHT. Activates NF-kappa-B signaling upon stimulation with lymphotoxin. Promotes apoptosis via TRAF3 and TRAF5. May play a role in the development of lymphoid organs. Functionally, (Microbial infection) Plays a role in host defense against Zika virus infection. In Mus musculus (Mouse), this protein is Tumor necrosis factor receptor superfamily member 3 (Ltbr).